The following is a 704-amino-acid chain: Elongation factor G (704 aa).

The tr-type G domain maps to 10–290 (NKVRNIGIMA…AVIDYLPSPL (281 aa)). GTP contacts are provided by residues 19-26 (AHIDAGKT), 83-87 (DTPGH), and 137-140 (NKMD).

The protein belongs to the TRAFAC class translation factor GTPase superfamily. Classic translation factor GTPase family. EF-G/EF-2 subfamily.

The protein localises to the cytoplasm. Functionally, catalyzes the GTP-dependent ribosomal translocation step during translation elongation. During this step, the ribosome changes from the pre-translocational (PRE) to the post-translocational (POST) state as the newly formed A-site-bound peptidyl-tRNA and P-site-bound deacylated tRNA move to the P and E sites, respectively. Catalyzes the coordinated movement of the two tRNA molecules, the mRNA and conformational changes in the ribosome. The polypeptide is Elongation factor G (Clavibacter sepedonicus (Clavibacter michiganensis subsp. sepedonicus)).